A 334-amino-acid polypeptide reads, in one-letter code: GTP 3',8-cyclase (334 aa).

Residues 11-236 enclose the Radical SAM core domain; that stretch reads GFNRKIDYLR…ESTESSMGPA (226 aa). GTP is bound at residue Arg20. 2 residues coordinate [4Fe-4S] cluster: Cys27 and Cys31. Tyr33 serves as a coordination point for S-adenosyl-L-methionine. Cys34 contacts [4Fe-4S] cluster. Arg69 serves as a coordination point for GTP. Gly73 is an S-adenosyl-L-methionine binding site. Position 100 (Thr100) interacts with GTP. Ser124 is a binding site for S-adenosyl-L-methionine. Lys161 serves as a coordination point for GTP. Residue Met195 participates in S-adenosyl-L-methionine binding. Cys260 and Cys263 together coordinate [4Fe-4S] cluster. 265-267 contributes to the GTP binding site; the sequence is RVR. Cys277 contributes to the [4Fe-4S] cluster binding site.

The protein belongs to the radical SAM superfamily. MoaA family. As to quaternary structure, monomer and homodimer. The cofactor is [4Fe-4S] cluster.

It catalyses the reaction GTP + AH2 + S-adenosyl-L-methionine = (8S)-3',8-cyclo-7,8-dihydroguanosine 5'-triphosphate + 5'-deoxyadenosine + L-methionine + A + H(+). Its pathway is cofactor biosynthesis; molybdopterin biosynthesis. In terms of biological role, catalyzes the cyclization of GTP to (8S)-3',8-cyclo-7,8-dihydroguanosine 5'-triphosphate. The protein is GTP 3',8-cyclase of Pseudomonas putida (strain ATCC 700007 / DSM 6899 / JCM 31910 / BCRC 17059 / LMG 24140 / F1).